The chain runs to 118 residues: Aspartate 1-decarboxylase (118 aa).

Ser-25 (schiff-base intermediate with substrate; via pyruvic acid) is an active-site residue. Residue Ser-25 is modified to Pyruvic acid (Ser). Residue Thr-57 participates in substrate binding. Residue Tyr-58 is the Proton donor of the active site. 73-75 lines the substrate pocket; that stretch reads GAA.

The protein belongs to the PanD family. As to quaternary structure, heterooctamer of four alpha and four beta subunits. Pyruvate serves as cofactor. Is synthesized initially as an inactive proenzyme, which is activated by self-cleavage at a specific serine bond to produce a beta-subunit with a hydroxyl group at its C-terminus and an alpha-subunit with a pyruvoyl group at its N-terminus.

Its subcellular location is the cytoplasm. The enzyme catalyses L-aspartate + H(+) = beta-alanine + CO2. The protein operates within cofactor biosynthesis; (R)-pantothenate biosynthesis; beta-alanine from L-aspartate: step 1/1. Its function is as follows. Catalyzes the pyruvoyl-dependent decarboxylation of aspartate to produce beta-alanine. In Caulobacter vibrioides (strain ATCC 19089 / CIP 103742 / CB 15) (Caulobacter crescentus), this protein is Aspartate 1-decarboxylase.